The sequence spans 388 residues: Cytochrome b (388 aa).

4 consecutive transmembrane segments (helical) span residues 32-52 (FGSL…TLAM), 76-98 (WLIR…LHVG), 113-133 (TWTI…LGYV), and 179-199 (FFAL…MHLI). 2 residues coordinate heme b: H82 and H96. Residues H183 and H197 each coordinate heme b. H202 contributes to the a ubiquinone binding site. 4 helical membrane passes run 226–246 (FIFK…IFIF), 290–310 (LLGV…PITD), 322–342 (LSKI…QLGA), and 349–369 (FIEF…IIVP).

It belongs to the cytochrome b family. As to quaternary structure, fungal cytochrome b-c1 complex contains 10 subunits; 3 respiratory subunits, 2 core proteins and 5 low-molecular weight proteins. Cytochrome b-c1 complex is a homodimer. It depends on heme b as a cofactor.

The protein resides in the mitochondrion inner membrane. Component of the ubiquinol-cytochrome c reductase complex (complex III or cytochrome b-c1 complex) that is part of the mitochondrial respiratory chain. The b-c1 complex mediates electron transfer from ubiquinol to cytochrome c. Contributes to the generation of a proton gradient across the mitochondrial membrane that is then used for ATP synthesis. The chain is Cytochrome b (cob) from Zymoseptoria tritici (Speckled leaf blotch fungus).